A 289-amino-acid polypeptide reads, in one-letter code: tRNA-cytidine(32) 2-sulfurtransferase (289 aa).

Residues 49–54 (SGGKDS) carry the PP-loop motif motif. Residues C124, C127, and C215 each coordinate [4Fe-4S] cluster.

Belongs to the TtcA family. Homodimer. It depends on Mg(2+) as a cofactor. The cofactor is [4Fe-4S] cluster.

Its subcellular location is the cytoplasm. It catalyses the reaction cytidine(32) in tRNA + S-sulfanyl-L-cysteinyl-[cysteine desulfurase] + AH2 + ATP = 2-thiocytidine(32) in tRNA + L-cysteinyl-[cysteine desulfurase] + A + AMP + diphosphate + H(+). Its pathway is tRNA modification. Its function is as follows. Catalyzes the ATP-dependent 2-thiolation of cytidine in position 32 of tRNA, to form 2-thiocytidine (s(2)C32). The sulfur atoms are provided by the cysteine/cysteine desulfurase (IscS) system. This chain is tRNA-cytidine(32) 2-sulfurtransferase, found in Methylococcus capsulatus (strain ATCC 33009 / NCIMB 11132 / Bath).